The following is a 145-amino-acid chain: Bacilliredoxin SERP1006 (145 aa).

The protein belongs to the bacilliredoxin family.

This chain is Bacilliredoxin SERP1006, found in Staphylococcus epidermidis (strain ATCC 35984 / DSM 28319 / BCRC 17069 / CCUG 31568 / BM 3577 / RP62A).